The sequence spans 243 residues: MAELLLGVNIDHIATLRNARGTAYPDPVQAAFIAEQAGADGITVHLREDRRHITDRDVRILRQTLDTRMNLEMAVTEEMLAIAVETKPHFCCLVPEKRQEVTTEGGQDVAGQRDKMRDACKRLADAGIQVSLFIDADEEQIKAAAEVGAPFIEIHTGCYADAKTDAEQAQELARIAKAATFAASLGLKVNAGHGLTYHNVKAIAAIPEMHELNIGHAIIGRAVMTGLKDAVAEMKRLMLEARG.

Asn-9 serves as a coordination point for 3-amino-2-oxopropyl phosphate. Position 11 to 12 (11 to 12 (DH)) interacts with 1-deoxy-D-xylulose 5-phosphate. 3-amino-2-oxopropyl phosphate is bound at residue Arg-20. His-45 functions as the Proton acceptor in the catalytic mechanism. Arg-47 and His-52 together coordinate 1-deoxy-D-xylulose 5-phosphate. The active-site Proton acceptor is Glu-72. Thr-102 serves as a coordination point for 1-deoxy-D-xylulose 5-phosphate. The active-site Proton donor is His-193. Residues Gly-194 and 215–216 (GH) each bind 3-amino-2-oxopropyl phosphate.

It belongs to the PNP synthase family. As to quaternary structure, homooctamer; tetramer of dimers.

Its subcellular location is the cytoplasm. It catalyses the reaction 3-amino-2-oxopropyl phosphate + 1-deoxy-D-xylulose 5-phosphate = pyridoxine 5'-phosphate + phosphate + 2 H2O + H(+). Its pathway is cofactor biosynthesis; pyridoxine 5'-phosphate biosynthesis; pyridoxine 5'-phosphate from D-erythrose 4-phosphate: step 5/5. Catalyzes the complicated ring closure reaction between the two acyclic compounds 1-deoxy-D-xylulose-5-phosphate (DXP) and 3-amino-2-oxopropyl phosphate (1-amino-acetone-3-phosphate or AAP) to form pyridoxine 5'-phosphate (PNP) and inorganic phosphate. The polypeptide is Pyridoxine 5'-phosphate synthase (Shigella dysenteriae serotype 1 (strain Sd197)).